The chain runs to 356 residues: Histidine biosynthesis bifunctional protein HisB (356 aa).

Residues 1-166 form a histidinol-phosphatase region; it reads MSKKVLFIDR…AICNYLTSLN (166 aa). The Nucleophile role is filled by aspartate 9. Residues aspartate 9 and aspartate 11 each contribute to the Mg(2+) site. Catalysis depends on aspartate 11, which acts as the Proton donor. 4 residues coordinate Zn(2+): cysteine 93, histidine 95, cysteine 101, and cysteine 103. Aspartate 130 is a binding site for Mg(2+). Residues 167–356 form an imidazoleglycerol-phosphate dehydratase region; sequence RYAHVKRITK…VLPSSKGVLS (190 aa).

This sequence in the N-terminal section; belongs to the histidinol-phosphatase family. It in the C-terminal section; belongs to the imidazoleglycerol-phosphate dehydratase family. The cofactor is Mg(2+). Zn(2+) is required as a cofactor.

Its subcellular location is the cytoplasm. It carries out the reaction D-erythro-1-(imidazol-4-yl)glycerol 3-phosphate = 3-(imidazol-4-yl)-2-oxopropyl phosphate + H2O. The catalysed reaction is L-histidinol phosphate + H2O = L-histidinol + phosphate. It functions in the pathway amino-acid biosynthesis; L-histidine biosynthesis; L-histidine from 5-phospho-alpha-D-ribose 1-diphosphate: step 6/9. It participates in amino-acid biosynthesis; L-histidine biosynthesis; L-histidine from 5-phospho-alpha-D-ribose 1-diphosphate: step 8/9. This chain is Histidine biosynthesis bifunctional protein HisB, found in Baumannia cicadellinicola subsp. Homalodisca coagulata.